We begin with the raw amino-acid sequence, 95 residues long: CRISPR-associated endoribonuclease Cas2 (95 aa).

Asp-10 is a binding site for Mg(2+).

This sequence belongs to the CRISPR-associated endoribonuclease Cas2 protein family. Homodimer, forms a heterotetramer with a Cas1 homodimer. Requires Mg(2+) as cofactor.

CRISPR (clustered regularly interspaced short palindromic repeat), is an adaptive immune system that provides protection against mobile genetic elements (viruses, transposable elements and conjugative plasmids). CRISPR clusters contain sequences complementary to antecedent mobile elements and target invading nucleic acids. CRISPR clusters are transcribed and processed into CRISPR RNA (crRNA). Functions as a ssRNA-specific endoribonuclease. Involved in the integration of spacer DNA into the CRISPR cassette. The chain is CRISPR-associated endoribonuclease Cas2 from Geobacter sulfurreducens (strain ATCC 51573 / DSM 12127 / PCA).